The sequence spans 405 residues: Dynactin subunit 2 (405 aa).

The disordered stretch occupies residues 1 to 24 (MADPKYADLPGIARNEPDVYETSD). A coiled-coil region spans residues 101–134 (PQQKYQRLLHEIQELTQEVEKAQSTVKESAAEEK). The segment at 186–207 (AKTRKNPEGKSPAKGPGPDNEN) is disordered. Residues 383 to 403 (KENLATVEDNFTSIDARIKKL) are a coiled coil.

The protein belongs to the dynactin subunit 2 family. As to quaternary structure, subunit of dynactin, a multiprotein complex part of a tripartite complex with dynein and a adapter, such as BICDL1, BICD2 or HOOK3. The dynactin complex is built around ACTR1A/ACTB filament and consists of an actin-related filament composed of a shoulder domain, a pointed end and a barbed end. Its length is defined by its flexible shoulder domain. The soulder is composed of 2 DCTN1 subunits, 4 DCTN2 and 2 DCTN3.

The protein localises to the cytoplasm. The protein resides in the cytoskeleton. It localises to the microtubule organizing center. Its subcellular location is the centrosome. It is found in the membrane. Its function is as follows. Part of the dynactin complex that activates the molecular motor dynein for ultra-processive transport along microtubules. In the dynactin soulder domain, binds the ACTR1A filament and acts as a molecular ruler to determine the length. Modulates cytoplasmic dynein binding to an organelle, and plays a role in prometaphase chromosome alignment and spindle organization during mitosis. Involved in anchoring microtubules to centrosomes. The polypeptide is Dynactin subunit 2 (dctn2) (Xenopus tropicalis (Western clawed frog)).